The primary structure comprises 166 residues: uncharacterized protein (166 aa).

Over residues 73–88 (SKLNNNNNSNNNNKMA) the composition is skewed to low complexity. Disordered stretches follow at residues 73–101 (SKLN…EKDK) and 126–166 (PQSS…EFNN). The segment covering 89–101 (VDNKDNKDNEKDK) has biased composition (basic and acidic residues). The segment covering 134–154 (SPTHKSPSSSPKTISPVKVSP) has biased composition (low complexity). A compositionally biased stretch (polar residues) spans 155–166 (TSSPIKNPEFNN).

This is an uncharacterized protein from Dictyostelium discoideum (Social amoeba).